Reading from the N-terminus, the 185-residue chain is Ribose 1,5-bisphosphate phosphokinase PhnN (185 aa).

Gly13–Asp20 contributes to the ATP binding site.

It belongs to the ribose 1,5-bisphosphokinase family.

It carries out the reaction alpha-D-ribose 1,5-bisphosphate + ATP = 5-phospho-alpha-D-ribose 1-diphosphate + ADP. It functions in the pathway metabolic intermediate biosynthesis; 5-phospho-alpha-D-ribose 1-diphosphate biosynthesis; 5-phospho-alpha-D-ribose 1-diphosphate from D-ribose 5-phosphate (route II): step 3/3. Catalyzes the phosphorylation of ribose 1,5-bisphosphate to 5-phospho-D-ribosyl alpha-1-diphosphate (PRPP). This Chromobacterium violaceum (strain ATCC 12472 / DSM 30191 / JCM 1249 / CCUG 213 / NBRC 12614 / NCIMB 9131 / NCTC 9757 / MK) protein is Ribose 1,5-bisphosphate phosphokinase PhnN.